A 778-amino-acid chain; its full sequence is Ral guanine nucleotide dissociation stimulator-like 2 (778 aa).

The segment covering 1–15 has biased composition (low complexity); the sequence is MLPRPLRLLLDTTPP. Residues 1–59 are disordered; the sequence is MLPRPLRLLLDTTPPGGVVLSSFRSRDPEEGGDPGGRAVGGGQEEEDEEEEEASVSVWD. The span at 33–42 shows a compositional bias: gly residues; that stretch reads DPGGRAVGGG. Positions 43 to 59 are enriched in acidic residues; sequence QEEEDEEEEEASVSVWD. The 125-residue stretch at 88 to 212 folds into the N-terminal Ras-GEF domain; it reads SSRRLRAGTL…GSADLIRNLR (125 aa). The region spanning 243–513 is the Ras-GEF domain; the sequence is LADHLAEQLT…HRVSCEVEPP (271 aa). Disordered stretches follow at residues 503–524, 541–564, 581–647, and 735–769; these read SHRVSCEVEPPGTSDSPAARTP, GGPTPLVSWDRPSVGGDEVPGTPA, SLDS…GPGS, and RRPSAATPGSHSGPSASGTPPSEGGGGSFPRIKAT. Residues 581–592 show a composition bias toward low complexity; it reads SLDSALESSPSL. The span at 620–632 shows a compositional bias: polar residues; the sequence is CGSPLSGNTGEGT. Positions 649-736 constitute a Ras-associating domain; the sequence is DCRIIRVQME…HDFLLRQRRR (88 aa). The span at 738–756 shows a compositional bias: low complexity; sequence SAATPGSHSGPSASGTPPS.

In terms of assembly, interacts with SAMD9.

In terms of biological role, probable guanine nucleotide exchange factor. Putative effector of Ras and/or Rap. Associates with the GTP-bound form of Rap 1A and H-Ras in vitro. In Mus musculus (Mouse), this protein is Ral guanine nucleotide dissociation stimulator-like 2 (Rgl2).